The chain runs to 563 residues: Methylcrotonoyl-CoA carboxylase beta chain, mitochondrial (563 aa).

The N-terminal 22 residues, 1-22 (MWGALRSVLRPCSRASVPRQRA), are a transit peptide targeting the mitochondrion. A CoA carboxyltransferase N-terminal domain is found at 49–306 (MKALVNQLHE…QKKLDVTVEP (258 aa)). A carboxyltransferase region spans residues 49–555 (MKALVNQLHE…SAALNAPIQR (507 aa)). An N6-acetyllysine; alternate modification is found at K70. K70 carries the post-translational modification N6-succinyllysine; alternate. K141 is modified (N6-succinyllysine). In terms of domain architecture, CoA carboxyltransferase C-terminal spans 309–555 (EPLFPADELY…SAALNAPIQR (247 aa)). The tract at residues 343 to 372 (RFNEFKALYGDTLVTGFARIFGYPVGIIGN) is acyl-CoA binding. K433 is modified (N6-succinyllysine). K495 is subject to N6-acetyllysine; alternate. K495 bears the N6-succinyllysine; alternate mark. The residue at position 511 (K511) is an N6-acetyllysine.

Belongs to the AccD/PCCB family. In terms of assembly, probably a dodecamer composed of six biotin-containing alpha subunits (MCCC1) and six beta (MCCC2) subunits.

It localises to the mitochondrion matrix. It catalyses the reaction 3-methylbut-2-enoyl-CoA + hydrogencarbonate + ATP = 3-methyl-(2E)-glutaconyl-CoA + ADP + phosphate + H(+). It functions in the pathway amino-acid degradation; L-leucine degradation; (S)-3-hydroxy-3-methylglutaryl-CoA from 3-isovaleryl-CoA: step 2/3. Functionally, carboxyltransferase subunit of the 3-methylcrotonyl-CoA carboxylase, an enzyme that catalyzes the conversion of 3-methylcrotonyl-CoA to 3-methylglutaconyl-CoA, a critical step for leucine and isovaleric acid catabolism. In Rattus norvegicus (Rat), this protein is Methylcrotonoyl-CoA carboxylase beta chain, mitochondrial (Mccc2).